Reading from the N-terminus, the 345-residue chain is Ryncolin-4 (345 aa).

Residues 1 to 19 (MKPWAAFHLIFLVASSLEG) form the signal peptide. The disordered stretch occupies residues 48–118 (ILQSQPGIPG…DKGDKGEDCN (71 aa)). The region spanning 57–114 (GIPGVPGTNGSEGLKGDPGPQGPPGIRGPDGIRGEAGPKGDKGDQGDKGDKGDKGDKG) is the Collagen-like domain. Over residues 86 to 116 (DGIRGEAGPKGDKGDQGDKGDKGDKGDKGED) the composition is skewed to basic and acidic residues. The Fibrinogen C-terminal domain maps to 121-339 (DCLPTEVRNC…YADMKIRPQK (219 aa)). Intrachain disulfides connect C130-C158 and C282-C295.

This sequence belongs to the ficolin lectin family. Veficolin subfamily. In terms of processing, hydroxylated, possibly at Pro-80. As to expression, expressed by the venom duct.

The protein resides in the secreted. Functionally, initiates complement activation and/or interferes in platelet aggregation and/or blood coagulation. This chain is Ryncolin-4, found in Cerberus rynchops (Dog-faced water snake).